Here is a 390-residue protein sequence, read N- to C-terminus: Pyruvate dehydrogenase E1 component subunit alpha-1, mitochondrial (390 aa).

A mitochondrion-targeting transit peptide spans Met1–Ala15. Pyruvate is bound by residues His91, Tyr117, Arg118, Gly166, Val168, Asp197, Gly198, Ala199, Asn226, and Tyr228. 8 residues coordinate thiamine diphosphate: Tyr117, Arg118, Gly166, Val168, Asp197, Gly198, Ala199, and Asn226. Asp197 serves as a coordination point for Mg(2+). Mg(2+)-binding residues include Asn226 and Tyr228. His292 is a thiamine diphosphate binding site. Residues Ser293–Gln312 are disordered. The span at Arg302–Gln312 shows a compositional bias: basic and acidic residues.

Tetramer of 2 alpha and 2 beta subunits. Thiamine diphosphate serves as cofactor. The cofactor is Mg(2+).

It is found in the mitochondrion matrix. It carries out the reaction N(6)-[(R)-lipoyl]-L-lysyl-[protein] + pyruvate + H(+) = N(6)-[(R)-S(8)-acetyldihydrolipoyl]-L-lysyl-[protein] + CO2. The pyruvate dehydrogenase complex catalyzes the overall conversion of pyruvate to acetyl-CoA and CO(2). It contains multiple copies of three enzymatic components: pyruvate dehydrogenase (E1), dihydrolipoamide acetyltransferase (E2) and lipoamide dehydrogenase (E3). The protein is Pyruvate dehydrogenase E1 component subunit alpha-1, mitochondrial of Oryza sativa subsp. japonica (Rice).